The sequence spans 301 residues: Formylmethanofuran--tetrahydromethanopterin formyltransferase (301 aa).

Belongs to the FTR family. In terms of assembly, homotetramer.

It is found in the cytoplasm. It carries out the reaction N-formylmethanofuran + 5,6,7,8-tetrahydromethanopterin + H(+) = N(5)-formyl-5,6,7,8-tetrahydromethanopterin + methanofuran. It participates in one-carbon metabolism; methanogenesis from CO(2); 5,10-methenyl-5,6,7,8-tetrahydromethanopterin from CO(2): step 2/3. Its function is as follows. Catalyzes the reversible transfer of a formyl group from formylmethanofuran (formyl-MFR) to tetrahydromethanopterin (H(4)MPT) to produce 5-formyl tetrahydromethanopterin (5-formyl-H(4)MPT) and methanofuran (MFR). The sequence is that of Formylmethanofuran--tetrahydromethanopterin formyltransferase from Methanocaldococcus jannaschii (strain ATCC 43067 / DSM 2661 / JAL-1 / JCM 10045 / NBRC 100440) (Methanococcus jannaschii).